Consider the following 921-residue polypeptide: Valine--tRNA ligase (921 aa).

The 'HIGH' region signature appears at 40 to 50 (PNVTGSLHMGH). Residues 522 to 526 (KMSKS) carry the 'KMSKS' region motif. Lys-525 serves as a coordination point for ATP. Residues 849–921 (MADLIDKEAE…LQHKNRIESL (73 aa)) are a coiled coil.

This sequence belongs to the class-I aminoacyl-tRNA synthetase family. ValS type 1 subfamily. Monomer.

Its subcellular location is the cytoplasm. It catalyses the reaction tRNA(Val) + L-valine + ATP = L-valyl-tRNA(Val) + AMP + diphosphate. Its function is as follows. Catalyzes the attachment of valine to tRNA(Val). As ValRS can inadvertently accommodate and process structurally similar amino acids such as threonine, to avoid such errors, it has a 'posttransfer' editing activity that hydrolyzes mischarged Thr-tRNA(Val) in a tRNA-dependent manner. The polypeptide is Valine--tRNA ligase (Legionella pneumophila (strain Lens)).